The following is a 310-amino-acid chain: Alpha/beta hydrolase domain-containing protein 17A (310 aa).

The segment at 38-61 is disordered; the sequence is VPEPEPGPGGAGAAPSGPLRTSAA. Catalysis depends on charge relay system residues Ser-190, Asp-255, and His-284. Phosphoserine is present on Ser-307.

The protein belongs to the AB hydrolase superfamily. ABHD17 family. In terms of processing, palmitoylated on cysteine residues located in a cysteine cluster at the N-terminus which promotes membrane localization. Palmitoylation is required for post-synaptic localization and for depalmitoylating activity towards DLG4/PSD95.

Its subcellular location is the cell membrane. It localises to the endosome membrane. It is found in the cell projection. The protein resides in the dendritic spine. The protein localises to the postsynaptic density membrane. It carries out the reaction S-hexadecanoyl-L-cysteinyl-[protein] + H2O = L-cysteinyl-[protein] + hexadecanoate + H(+). In terms of biological role, hydrolyzes fatty acids from S-acylated cysteine residues in proteins. Has depalmitoylating activity towards NRAS. Has depalmitoylating activity towards DLG4/PSD95. May have depalmitoylating activity towars MAP6. The polypeptide is Alpha/beta hydrolase domain-containing protein 17A (Mus musculus (Mouse)).